The primary structure comprises 436 residues: Indole-3-acetyl-aspartic acid hydrolase (436 aa).

This sequence belongs to the peptidase M20 family. Monomer.

The enzyme catalyses (indol-3-yl)acetyl-L-aspartate + H2O = (indol-3-yl)acetate + L-aspartate. Hydrolyzes indole-3-acetyl-aspartate (IAA-Asp) to indole-3-acetic acid (IAA). Shows an exclusively high substrate specificity for IAA-Asp. This is Indole-3-acetyl-aspartic acid hydrolase from Enterobacter agglomerans (Erwinia herbicola).